A 545-amino-acid polypeptide reads, in one-letter code: Bifunctional purine biosynthesis protein PurH (545 aa).

Residues 1–150 (MTNTNRPIRR…KNHATVAIVT (150 aa)) form the MGS-like domain.

Belongs to the PurH family.

The enzyme catalyses (6R)-10-formyltetrahydrofolate + 5-amino-1-(5-phospho-beta-D-ribosyl)imidazole-4-carboxamide = 5-formamido-1-(5-phospho-D-ribosyl)imidazole-4-carboxamide + (6S)-5,6,7,8-tetrahydrofolate. It carries out the reaction IMP + H2O = 5-formamido-1-(5-phospho-D-ribosyl)imidazole-4-carboxamide. Its pathway is purine metabolism; IMP biosynthesis via de novo pathway; 5-formamido-1-(5-phospho-D-ribosyl)imidazole-4-carboxamide from 5-amino-1-(5-phospho-D-ribosyl)imidazole-4-carboxamide (10-formyl THF route): step 1/1. The protein operates within purine metabolism; IMP biosynthesis via de novo pathway; IMP from 5-formamido-1-(5-phospho-D-ribosyl)imidazole-4-carboxamide: step 1/1. The protein is Bifunctional purine biosynthesis protein PurH of Bifidobacterium longum (strain NCC 2705).